Reading from the N-terminus, the 607-residue chain is Elongation factor 4 (607 aa).

Positions 11-193 constitute a tr-type G domain; sequence SKIRNFSIIA…QIVEKVPAPT (183 aa). Residues 23-28 and 140-143 contribute to the GTP site; these read DHGKST and NKID.

The protein belongs to the TRAFAC class translation factor GTPase superfamily. Classic translation factor GTPase family. LepA subfamily.

The protein resides in the cell membrane. The catalysed reaction is GTP + H2O = GDP + phosphate + H(+). Functionally, required for accurate and efficient protein synthesis under certain stress conditions. May act as a fidelity factor of the translation reaction, by catalyzing a one-codon backward translocation of tRNAs on improperly translocated ribosomes. Back-translocation proceeds from a post-translocation (POST) complex to a pre-translocation (PRE) complex, thus giving elongation factor G a second chance to translocate the tRNAs correctly. Binds to ribosomes in a GTP-dependent manner. This Bacillus anthracis (strain A0248) protein is Elongation factor 4.